Consider the following 741-residue polypeptide: Nuclear poly(A) polymerase 4 (741 aa).

ATP-binding positions include 101–103 (FGS), 113–116 (ADID), 114–116 (DID), Asp-169, Lys-230, Tyr-239, and 248–249 (GV). The Mg(2+) site is built by Asp-114, Asp-116, and Asp-169. The Nuclear localization signal signature appears at 485–492 (RRRQLPPF). Disordered regions lie at residues 494 to 556 (FPNG…LSPQ) and 683 to 741 (YEGF…RLLT). Residues 534–551 (KNDSEMMDVRPEKPEKRA) show a composition bias toward basic and acidic residues. Residues 701-717 (LYSQSGMSEDLQSNSLV) show a composition bias toward polar residues. The span at 721–731 (EKSEDRARSES) shows a compositional bias: basic and acidic residues. A compositionally biased stretch (polar residues) spans 732–741 (FQKSQIRLLT).

The protein belongs to the poly(A) polymerase family. Monomer. Forms a complex with cleavage and polyadenylation specificity factor (CPSF) subunits CFIS2, FIPS3, PAPS1, PABN1, PABN2, PABN3 and FIPS5. It depends on Mg(2+) as a cofactor. Mn(2+) serves as cofactor. In terms of tissue distribution, mostly expressed in flowers (very active in pollen, sepals, styles, and stigmas), cotyledons and hypocotyls, and, to a lower extent, in roots (confined to the vascular tissue in the radicle) and leaves (in the vascular tissue and leaf petioles). Barely detected in stems. Active in the primary and secondary root systems.

The protein localises to the nucleus. It carries out the reaction RNA(n) + ATP = RNA(n)-3'-adenine ribonucleotide + diphosphate. In terms of biological role, essential protein. Polymerase that creates the 3'-poly(A) tail of mRNA's. Also required for the endoribonucleolytic cleavage reaction at some polyadenylation sites. May acquire specificity through interaction with a cleavage and polyadenylation specificity factor (CPSF) at its C-terminus. This Arabidopsis thaliana (Mouse-ear cress) protein is Nuclear poly(A) polymerase 4.